Here is a 128-residue protein sequence, read N- to C-terminus: 3-aminoacrylate deaminase RutC (128 aa).

Belongs to the RutC family. As to quaternary structure, homotrimer.

It carries out the reaction (Z)-3-aminoacrylate + H2O + H(+) = 3-oxopropanoate + NH4(+). Functionally, involved in pyrimidine catabolism. Catalyzes the deamination of 3-aminoacrylate to malonic semialdehyde, a reaction that can also occur spontaneously. RutC may facilitate the reaction and modulate the metabolic fitness, rather than catalyzing essential functions. The polypeptide is 3-aminoacrylate deaminase RutC (Escherichia coli (strain SE11)).